We begin with the raw amino-acid sequence, 360 residues long: UDP-N-acetylglucosamine--N-acetylmuramyl-(pentapeptide) pyrophosphoryl-undecaprenol N-acetylglucosamine transferase (360 aa).

UDP-N-acetyl-alpha-D-glucosamine is bound by residues serine 198 and glutamine 289.

This sequence belongs to the glycosyltransferase 28 family. MurG subfamily.

The protein localises to the cell membrane. It catalyses the reaction Mur2Ac(oyl-L-Ala-gamma-D-Glu-L-Lys-D-Ala-D-Ala)-di-trans,octa-cis-undecaprenyl diphosphate + UDP-N-acetyl-alpha-D-glucosamine = beta-D-GlcNAc-(1-&gt;4)-Mur2Ac(oyl-L-Ala-gamma-D-Glu-L-Lys-D-Ala-D-Ala)-di-trans,octa-cis-undecaprenyl diphosphate + UDP + H(+). The protein operates within cell wall biogenesis; peptidoglycan biosynthesis. Functionally, cell wall formation. Catalyzes the transfer of a GlcNAc subunit on undecaprenyl-pyrophosphoryl-MurNAc-pentapeptide (lipid intermediate I) to form undecaprenyl-pyrophosphoryl-MurNAc-(pentapeptide)GlcNAc (lipid intermediate II). In Streptococcus pyogenes serotype M4 (strain MGAS10750), this protein is UDP-N-acetylglucosamine--N-acetylmuramyl-(pentapeptide) pyrophosphoryl-undecaprenol N-acetylglucosamine transferase.